A 492-amino-acid chain; its full sequence is Ketol-acid reductoisomerase (NADP(+)) (492 aa).

The KARI N-terminal Rossmann domain occupies 14-208; the sequence is LDQLGRCRFM…GGHKAGVLES (195 aa). NADP(+)-binding positions include 45–48, arginine 68, arginine 76, serine 78, and 108–110; these read CGAQ and DKQ. The active site involves histidine 132. Glycine 158 serves as a coordination point for NADP(+). KARI C-terminal knotted domains are found at residues 209–344 and 345–485; these read SFVA…NAPK and YDGK…MTDM. The Mg(2+) site is built by aspartate 217, glutamate 221, glutamate 389, and glutamate 393. Serine 414 serves as a coordination point for substrate.

This sequence belongs to the ketol-acid reductoisomerase family. It depends on Mg(2+) as a cofactor.

It catalyses the reaction (2R)-2,3-dihydroxy-3-methylbutanoate + NADP(+) = (2S)-2-acetolactate + NADPH + H(+). It carries out the reaction (2R,3R)-2,3-dihydroxy-3-methylpentanoate + NADP(+) = (S)-2-ethyl-2-hydroxy-3-oxobutanoate + NADPH + H(+). The protein operates within amino-acid biosynthesis; L-isoleucine biosynthesis; L-isoleucine from 2-oxobutanoate: step 2/4. It functions in the pathway amino-acid biosynthesis; L-valine biosynthesis; L-valine from pyruvate: step 2/4. Functionally, involved in the biosynthesis of branched-chain amino acids (BCAA). Catalyzes an alkyl-migration followed by a ketol-acid reduction of (S)-2-acetolactate (S2AL) to yield (R)-2,3-dihydroxy-isovalerate. In the isomerase reaction, S2AL is rearranged via a Mg-dependent methyl migration to produce 3-hydroxy-3-methyl-2-ketobutyrate (HMKB). In the reductase reaction, this 2-ketoacid undergoes a metal-dependent reduction by NADPH to yield (R)-2,3-dihydroxy-isovalerate. This is Ketol-acid reductoisomerase (NADP(+)) from Haemophilus influenzae (strain PittEE).